A 63-amino-acid polypeptide reads, in one-letter code: Laccase-C1 (63 aa).

This sequence belongs to the multicopper oxidase family. In terms of assembly, monomer. Requires Cu cation as cofactor. Post-translationally, glycosylated; contains 16% carbohydrates.

The protein localises to the secreted. The catalysed reaction is 4 hydroquinone + O2 = 4 benzosemiquinone + 2 H2O. Its activity is regulated as follows. Inhibited by sodium azide. Functionally, lignin degradation and detoxification of lignin-derived products. Oxidation of a broad range of substrates including mono-, di- and polyphenols, aromatic amines and methoxy-substituted phenols accompanied by reduction of oxygen to water. This is Laccase-C1 from Cerrena unicolor (Canker rot fungus).